The following is a 387-amino-acid chain: Major outer membrane porin (387 aa).

The N-terminal stretch at 1 to 22 is a signal peptide; the sequence is MKKLLKSVLAFAVLGSASSLHA.

It belongs to the chlamydial porin (CP) (TC 1.B.2) family. Part of a disulfide cross-linked outer membrane complex (COMC) composed of the major outer membrane porin (MOMP), the small cysteine-rich protein (OmcA) and the large cysteine-rich periplasmic protein (OmcB).

The protein resides in the cell outer membrane. Its function is as follows. In elementary bodies (EBs, the infectious stage, which is able to survive outside the host cell) provides the structural integrity of the outer envelope through disulfide cross-links with the small cysteine-rich protein and the large cysteine-rich periplasmic protein. It has been described in publications as the Sarkosyl-insoluble COMC (Chlamydia outer membrane complex), and serves as the functional equivalent of peptidoglycan. Permits diffusion of specific solutes through the outer membrane. This Chlamydia muridarum (strain MoPn / Nigg) protein is Major outer membrane porin (ompA).